Reading from the N-terminus, the 337-residue chain is tRNA N6-adenosine threonylcarbamoyltransferase (337 aa).

Residues H111 and H115 each coordinate Fe cation. Residues 134-138 (LVSGG), D167, G180, and N272 contribute to the substrate site. D300 provides a ligand contact to Fe cation.

The protein belongs to the KAE1 / TsaD family. The cofactor is Fe(2+).

The protein resides in the cytoplasm. It catalyses the reaction L-threonylcarbamoyladenylate + adenosine(37) in tRNA = N(6)-L-threonylcarbamoyladenosine(37) in tRNA + AMP + H(+). In terms of biological role, required for the formation of a threonylcarbamoyl group on adenosine at position 37 (t(6)A37) in tRNAs that read codons beginning with adenine. Is involved in the transfer of the threonylcarbamoyl moiety of threonylcarbamoyl-AMP (TC-AMP) to the N6 group of A37, together with TsaE and TsaB. TsaD likely plays a direct catalytic role in this reaction. The chain is tRNA N6-adenosine threonylcarbamoyltransferase from Citrobacter koseri (strain ATCC BAA-895 / CDC 4225-83 / SGSC4696).